A 201-amino-acid chain; its full sequence is Recombination protein RecR (201 aa).

The segment at 60–75 (CSCCGNVDTSDPCTIC) adopts a C4-type zinc-finger fold. The Toprim domain maps to 83 to 178 (TTLIVVEDVS…RVTRLAHGVP (96 aa)).

It belongs to the RecR family.

May play a role in DNA repair. It seems to be involved in an RecBC-independent recombinational process of DNA repair. It may act with RecF and RecO. The chain is Recombination protein RecR from Brucella anthropi (strain ATCC 49188 / DSM 6882 / CCUG 24695 / JCM 21032 / LMG 3331 / NBRC 15819 / NCTC 12168 / Alc 37) (Ochrobactrum anthropi).